Here is a 193-residue protein sequence, read N- to C-terminus: NADH-quinone oxidoreductase subunit B (193 aa).

The [4Fe-4S] cluster site is built by C49, C50, C115, and C144. A disordered region spans residues 172–193; sequence FKKEEPREANAPVPVNTEMPLE.

It belongs to the complex I 20 kDa subunit family. NDH-1 is composed of 14 different subunits. Subunits NuoB, C, D, E, F, and G constitute the peripheral sector of the complex. It depends on [4Fe-4S] cluster as a cofactor.

Its subcellular location is the cell inner membrane. The enzyme catalyses a quinone + NADH + 5 H(+)(in) = a quinol + NAD(+) + 4 H(+)(out). Its function is as follows. NDH-1 shuttles electrons from NADH, via FMN and iron-sulfur (Fe-S) centers, to quinones in the respiratory chain. The immediate electron acceptor for the enzyme in this species is believed to be ubiquinone. Couples the redox reaction to proton translocation (for every two electrons transferred, four hydrogen ions are translocated across the cytoplasmic membrane), and thus conserves the redox energy in a proton gradient. This is NADH-quinone oxidoreductase subunit B from Akkermansia muciniphila (strain ATCC BAA-835 / DSM 22959 / JCM 33894 / BCRC 81048 / CCUG 64013 / CIP 107961 / Muc).